Consider the following 284-residue polypeptide: MRLQRQCIVVNMRSAIVLIMIFVLTGIRNSETASGGNQMDLSDSKGDHKDNSNASNGNGNANDNEVYVPPLVSSMVAKSGGGAGGLLDNITAYSSSSSSSSSNGNNNMLCPYDKETPCDRLQFPCIRCNYNHGCIYGRDLNVTCEVINNVQCLGERSFQRQMNCRYCYQTEMWQQSCGQRSSCNSATDKLFRTNCTVHHDVLCLGNRSFTRNLRCNWTQGYRWSTALLISLTLGGFGADRFYLGHWQEGIGKLFSFGGLGVWTIIDVLLISMHYLGPADGSLYI.

The N-terminal stretch at 1 to 32 is a signal peptide; it reads MRLQRQCIVVNMRSAIVLIMIFVLTGIRNSET. The interval 33-63 is disordered; sequence ASGGNQMDLSDSKGDHKDNSNASNGNGNAND. The Extracellular portion of the chain corresponds to 33 to 225; it reads ASGGNQMDLS…NWTQGYRWST (193 aa). The span at 42-51 shows a compositional bias: basic and acidic residues; that stretch reads SDSKGDHKDN. Residues 52–63 are compositionally biased toward low complexity; it reads SNASNGNGNAND. N-linked (GlcNAc...) asparagine glycosylation is found at N53, N89, N141, N194, N206, and N216. The region spanning 220–267 is the TM2 domain; sequence GYRWSTALLISLTLGGFGADRFYLGHWQEGIGKLFSFGGLGVWTIIDV. A helical transmembrane segment spans residues 226–246; sequence ALLISLTLGGFGADRFYLGHW. The Cytoplasmic portion of the chain corresponds to 247–249; that stretch reads QEG. The chain crosses the membrane as a helical span at residues 250-270; it reads IGKLFSFGGLGVWTIIDVLLI. Over 271 to 284 the chain is Extracellular; that stretch reads SMHYLGPADGSLYI.

Belongs to the TM2 family. In terms of tissue distribution, expressed in female ovary, mainly in nurse cells (at protein level). Expressed in the brain at low levels (at protein level).

The protein localises to the membrane. Its subcellular location is the vesicle. In terms of biological role, positive regulator of Notch signaling during lateral inhibition and boundary formation. Interacts with Notch signaling at the membrane, at the level of gamma-secretase-mediated S3 cleavage. May regulate Notch signaling by regulating the subcellular localization of N/Notch in a context dependent manner. Maternal neurogenic factor involved in Notch signaling-dependent mesectodermal and neuroectodermal specification during early embryogenesis. Functions cooperatively with bisc/TM2D1 and amrt/TM2D2. Required for maintenance of neuronal function. Involved in imaginal specification of eyes and wings. The protein is TM2 domain-containing protein almondex of Drosophila melanogaster (Fruit fly).